The chain runs to 697 residues: Long-chain-fatty-acid--CoA ligase 6 (697 aa).

A helical; Signal-anchor for type III membrane protein membrane pass occupies residues 25–45; that stretch reads LSATTLVSMGALAAILAYWFT. Topologically, residues 46–697 are cytoplasmic; the sequence is HRPKALQPPC…QIEELYSISM (652 aa).

Belongs to the ATP-dependent AMP-binding enzyme family. It depends on Mg(2+) as a cofactor. As to expression, expressed predominantly in erythrocyte precursors, in particular in reticulocytes, fetal blood cells derived from fetal liver, hemopoietic stem cells from cord blood, bone marrow and brain.

The protein resides in the mitochondrion outer membrane. Its subcellular location is the peroxisome membrane. It is found in the microsome membrane. It localises to the endoplasmic reticulum membrane. The catalysed reaction is a long-chain fatty acid + ATP + CoA = a long-chain fatty acyl-CoA + AMP + diphosphate. It catalyses the reaction (5Z,8Z,11Z,14Z)-eicosatetraenoate + ATP + CoA = (5Z,8Z,11Z,14Z)-eicosatetraenoyl-CoA + AMP + diphosphate. It carries out the reaction hexadecanoate + ATP + CoA = hexadecanoyl-CoA + AMP + diphosphate. The enzyme catalyses (E)-hexadec-2-enoate + ATP + CoA = (2E)-hexadecenoyl-CoA + AMP + diphosphate. The catalysed reaction is 15-hydroxy-(5Z,8Z,11Z,13E)-eicosatetraenoate + ATP + CoA = 15-hydroxy-(5Z,8Z,11Z,13E)-eicosatetraenoyl-CoA + AMP + diphosphate. It catalyses the reaction 12-hydroxy-(5Z,8Z,10E,14Z)-eicosatetraenoate + ATP + CoA = 12-hydroxy-(5Z,8Z,10E,14Z)-eicosatetraenoyl-CoA + AMP + diphosphate. It carries out the reaction 5-hydroxy-(6E,8Z,11Z,14Z)-eicosatetraenoate + ATP + CoA = 5-hydroxy-(6E,8Z,11Z,14Z)-eicosatetraenoyl-CoA + AMP + diphosphate. Functionally, catalyzes the conversion of long-chain fatty acids to their active form acyl-CoA for both synthesis of cellular lipids, and degradation via beta-oxidation. Plays an important role in fatty acid metabolism in brain and the acyl-CoAs produced may be utilized exclusively for the synthesis of the brain lipid. In Homo sapiens (Human), this protein is Long-chain-fatty-acid--CoA ligase 6.